Consider the following 318-residue polypeptide: L-malyl-CoA/beta-methylmalyl-CoA lyase (318 aa).

Substrate contacts are provided by F19, R24, K30, and R76. Mg(2+) is bound by residues E141 and D168. Substrate is bound by residues 167–168 and 251–252; these read AD and IH.

The protein belongs to the HpcH/HpaI aldolase family. Homohexamer. Dimer of trimers. The cofactor is Mg(2+). Mn(2+) is required as a cofactor.

The enzyme catalyses (S)-malyl-CoA = glyoxylate + acetyl-CoA. It carries out the reaction (2R,3S)-beta-methylmalyl-CoA = propanoyl-CoA + glyoxylate. Involved in the ethylmalonyl-CoA pathway for acetate assimilation. Catalyzes the reversible condensation of glyoxylate and acetyl-CoA to L-malyl-CoA and the reversible condensation of glyoxylate and propionyl-CoA to yield beta-methylmalyl-CoA. The polypeptide is L-malyl-CoA/beta-methylmalyl-CoA lyase (Cereibacter sphaeroides (strain ATCC 17029 / ATH 2.4.9) (Rhodobacter sphaeroides)).